Reading from the N-terminus, the 363-residue chain is NAD(P)H-quinone oxidoreductase subunit 1, chloroplastic (363 aa).

Transmembrane regions (helical) follow at residues 30–50, 98–118, 129–149, 248–268, 300–320, and 343–363; these read LVPI…IVWL, FSIG…VIPF, IGIF…LMSG, YSGI…LLSS, IIGT…FLFI, and FLLP…LLSL.

The protein belongs to the complex I subunit 1 family. As to quaternary structure, NDH is composed of at least 16 different subunits, 5 of which are encoded in the nucleus.

Its subcellular location is the plastid. The protein localises to the chloroplast thylakoid membrane. The catalysed reaction is a plastoquinone + NADH + (n+1) H(+)(in) = a plastoquinol + NAD(+) + n H(+)(out). It carries out the reaction a plastoquinone + NADPH + (n+1) H(+)(in) = a plastoquinol + NADP(+) + n H(+)(out). Functionally, NDH shuttles electrons from NAD(P)H:plastoquinone, via FMN and iron-sulfur (Fe-S) centers, to quinones in the photosynthetic chain and possibly in a chloroplast respiratory chain. The immediate electron acceptor for the enzyme in this species is believed to be plastoquinone. Couples the redox reaction to proton translocation, and thus conserves the redox energy in a proton gradient. In Gossypium hirsutum (Upland cotton), this protein is NAD(P)H-quinone oxidoreductase subunit 1, chloroplastic.